The chain runs to 387 residues: Cyclin-J-like protein (387 aa).

A Cyclin N-terminal domain is found at 13-142; sequence DVHCTLREKE…LLEAFSWDLC (130 aa).

Belongs to the cyclin family. Cyclin J subfamily.

The chain is Cyclin-J-like protein (Ccnjl) from Mus musculus (Mouse).